A 403-amino-acid chain; its full sequence is S-adenosylmethionine:tRNA ribosyltransferase-isomerase (403 aa).

It belongs to the QueA family. Monomer.

It localises to the cytoplasm. The enzyme catalyses 7-aminomethyl-7-carbaguanosine(34) in tRNA + S-adenosyl-L-methionine = epoxyqueuosine(34) in tRNA + adenine + L-methionine + 2 H(+). It participates in tRNA modification; tRNA-queuosine biosynthesis. Transfers and isomerizes the ribose moiety from AdoMet to the 7-aminomethyl group of 7-deazaguanine (preQ1-tRNA) to give epoxyqueuosine (oQ-tRNA). The polypeptide is S-adenosylmethionine:tRNA ribosyltransferase-isomerase (Psychrobacter arcticus (strain DSM 17307 / VKM B-2377 / 273-4)).